We begin with the raw amino-acid sequence, 211 residues long: 3-demethoxyubiquinol 3-hydroxylase (211 aa).

Residues E60, E90, H93, E142, E174, and H177 each contribute to the Fe cation site.

This sequence belongs to the COQ7 family. It depends on Fe cation as a cofactor.

The protein resides in the cell membrane. The catalysed reaction is a 5-methoxy-2-methyl-3-(all-trans-polyprenyl)benzene-1,4-diol + AH2 + O2 = a 3-demethylubiquinol + A + H2O. It participates in cofactor biosynthesis; ubiquinone biosynthesis. Its function is as follows. Catalyzes the hydroxylation of 2-nonaprenyl-3-methyl-6-methoxy-1,4-benzoquinol during ubiquinone biosynthesis. The protein is 3-demethoxyubiquinol 3-hydroxylase of Francisella tularensis subsp. tularensis (strain FSC 198).